We begin with the raw amino-acid sequence, 337 residues long: 25S rRNA (adenine(2142)-N(1))-methyltransferase (337 aa).

Positions 180 and 201 each coordinate S-adenosyl-L-methionine.

The protein belongs to the BMT2 family.

It is found in the nucleus. The protein localises to the nucleolus. The enzyme catalyses adenosine(2142) in 25S rRNA + S-adenosyl-L-methionine = N(1)-methyladenosine(2142) in 25S rRNA + S-adenosyl-L-homocysteine + H(+). Functionally, S-adenosyl-L-methionine-dependent methyltransferase that specifically methylates the N(1) position of adenine 2142 in 25S rRNA. N(1)-methyladenine(2142) in 25S rRNA is present in helix 65, a region that accounts for most of the intersubunit surface of the large subunit. The sequence is that of 25S rRNA (adenine(2142)-N(1))-methyltransferase from Saccharomyces cerevisiae (strain ATCC 204508 / S288c) (Baker's yeast).